The chain runs to 4717 residues: MDVLIEWVAIYPQIYDILEHINYVPSNTLQRLRLHQPWSKIDYDVWFLYASDEIRETCKVKYYGETKTYGEVFVLENERISQLHRLFVSWTVSERAEHLKNLLFDAGLSNLPLVELGGNVFFNSHVPLPCSLVLTKSTQENLNRITPYLVQKRPILLAGPEGIGKKFLITQIAAKLGQQIIRIHLSDSTDPKMLIGTYTSPKPGEFEWQPGVLTQAVITGKWILFTNIEHAPSEVLSVLLPLLEKRQLVIPSRGETIYAKGSFQMFATSSMKTKILGQRLWQILDLTYQPDECVEVVSTLYPVLSIICPTLYSVYKDIFDLFSQRSFLATSKIYRRLCLRDFYKFIKRVAFLYHKFMIPSDHVVISQELQDAVFKEAIDMFGAFIPSRDGFDLVVRNVAIELNIPPEKALQLRYSIPVFQNLEHNINIGRCSLKKLSTIRSCSTNSYAFTSSSLGLLEQLAAGVQTNEPLLLVGETGTGKTTTIQLLAGLLGQKVTVINMSQQTESSDMLGGYKPINASTLGLPLHERFIDIFEQTFSSKKNAKFISMASTSARRFRWKTCLKIWKEACKLSKTVLDGQQPLPNPQKRQKRLSNQVELRNQWAKFEKEVEDFEKVLTGGSNGFMFSFVEGALVKAVRSGHWVLLDEINLASLETLEPIGQLLSSYESGILLSERGDITPITPHKNFRLFGCMNPSTDVGKRELEPSFRSRFTEIYVHSPDQNLDDLLSIIQKYIGSLCIGNEHVIREVAELYQVAKSLSLDGSLVDGAGQRPHYTVRTLSRTLSYVTEIAPIYGLRRSLYEGFCMSFLTLLDHTSESLLYNHVVRFTLGELNRDQQNAILKQIPKVPDHSSYIAFCHYWLRRGSFPVEEQEHYIITPFVQKNLLNIARACSTRMFPILIQGPTSSGKTSMIEYVAKKTGHKFVRINNHEHTDLQEYIGTYVTDDNGSLSFREGVLVEALRNGYWIVLDELNLAPTDVLEALNRLLDDNRELFIPETQVLVKPHPEFMLFATQNPPGVYAGRKHLSRAFRNRFLEIHFDDIPENELETILHKRCKIAPSYAAKIVQVFRELSLRRQTTRIFEQKNSFATLRDLFRWAFREAVGYQQLAENGYMLLAERARDQKDKLAVQEVIEKVMKVKIDTDGIYNLDSMEIFQDMSLKEGPLSKVVWTRPMIRLFCLVWRCLLAKEPVLLVGDTGCGKTTVCQILAECLHKELHIINAHQDTENGDIIGAQRPVRNRSAVNYSLHSQLCEKFNVQESLDSIDDLIEKFEKLSSSEKNDNLSNLIERQIIKYRSLFEWHDGALVTAMKQGDFFLLDEISLADDSVLERLNSVLELSRTLTLVEHSNAAVSLTAKDGFAFFATMNPGGDYGKKELSPALRNRFTEIWVPPMVDTEDILKIVEGKLHNNKIELARPLVEYAKWHANEYLYTDVISIRDVLSAVEFINACEILDLNLVLFNAVSMVFIDALGSFTTFSLSNNLASLHAERQRCFAKLNELAGSNIMASKSADISIKFSDSSFFIGDFGIPLGDSVESDSTYSLHTDTTLMNASKVLRALQVLKPILLEGSPGVGKTSLITALARETGHQLVRINLSDQTDLMDLFGSDVPVEGGEGGQFAWRDAPFLAAMRNGHWVLLDELNLASQSVLEGLNACLDHRNEAYIPELDKVFKAHPNFRVFAAQNPQHQGGGRKGLPRSFINRFSVVYVEALKEKDMIEIAACNYHQVNEDWRLKIIKFMFRLQDNIEKDISFGSFGSPWEFNLRDTLRWLQLLNDAPKYTCVSPADYLEVMVLHRMRTVEDRVRTCELFKEVFDIDYEPRTIGFSLSSQCFKVGHSLLVRDVERQKTLLDSQNILQSQLPVLESVITCINKKWPCILVGDTATGKTCILRLLAAIAGAKIKEMAVNSDTDTMDLIGEYEQIDISRKASELFTDLSQQLLNIVIKYRNFDNIFRETSLYTLTTTSFKTHSQAFTLLQKVVDQLDQLKIHETLVHSLGDIHEKARKLLAEFSASPAGRFEWFDGYLLKAVEEGHWFVLDNANLCSPAVLDRLNSLLEHKGVLIVNEKTTEDGHPKTIKPHPNFRLFLTVNPVYGELSRAMRNRGVEIFLLKEALTEIDKKQMSLLEPAPISSAVDTLASNISYIKYVFETMGKIEIDGNYMYIAHAIILALFSPRQLKLLRKVLLTNPQFSLSIKADAELLLTLKNLVQKIYCADYFNHMDLKASRFMDIYEYPVQLREVVGLIQTINDFQSVILTSHLELPETYASGLLFVSAHEILDLTEEVNRLAVSTSNSTYLLKSASAVYHNVSSFKGSTPSLWNLLNQFSKFLIEIASANSNIVYKLSYDVIRHFLKLVVLWKNIYVWTNVPDCDISRFYCYTKMLGEWMFTLTEKTKLLESFLPKDSLEKFSELQNLSTGLHMQAIWDKWHAFVPRTYDQWSLWNTVDKLLTQYVNANIPSISMETTACEVVGTSLSLLNKVLVENEVGDIYSYLKILGKGVNELKSSKQVILPENLVNLFNCLASLDLLHIFIKYTTSSFFLTDDFVRFIRVCFHSRISGNLLTLLHGISFDSTKAVAPVLTYFDFCSLTTGNILGRIALAFTSIDENANLESANIFEHARLALLQHFMDHSSLLAEDSSTKMNLILLQRYAVIISIFLDQGKCEKANDLITKLSLPYEELAENFVSILEACKAFLVANSEFISYTYTERFIHSLRFLKDSWLSSNQQKMLKNQGMAYIYFASGMLLVYVPDKPFDPALLPLLTVESLRHYLESLYKESQILEIAESLNSGKVNSVMRRLVSTEISNTPNIDSSFSTVYRSLNESIVPLYSELEFFMKSVVLNQYIFELAMRLSKESNIAVVEEAKSFVTKWKAYIERIREAYPQFVDVYELILSFISFMIYGIELLMFEAKRRLDERSQILSTLILTLVDPSSFARSLSFDDVSNLIEQIKVLDLNDSIRFEIYLFLASRLCSEKQHSSDTHSLANSFVLLANEFYIHNAKIKQKELEEIEEKNRLYRQREFNFDKNDYLKVFINYDDEVEPEVEPEVVIERKRFLQLQFAFWSLYNEIYSEKMNVIPLEQLMNTGSYLAKKIKVKNPDMIASSGFDIVSVVLMMGVKSTNERQYWTPPVYNFYSDPNPSKAIEVRDLIKIVESRAISLIKNWPENFVLRGLKDAIDAILNLSPFSPIAEYLSKLERVFHLLSEWEKLASREYSLANEMDLIKKKIIDWRKFELSNWNNLLKLEEYKLSERVYPRLYSILQFIILKPFFENSKFTKQNLCESASIIVQFITDLTVGEFQLCLKCLLSFSQHAASLRICHGIDAMLLNIYHYFEQFLSKVSEAIHTQKQSLENSIKERILLMSWKDTNVYALKESAKKSHAELFKVLHRYREVLRQPVSSYLSQKHDWDSLLDTENNSAMWVAKKVNLSPSYIEKMDTEIMKLVPVRFSNTPTTLRLMWTLFANVEKPGSTFTNMVSNLITDARELMKLTPETINDDNLSEIKHLKSRKHLLLTETFKTLKAFGLQYRVKAGIEENLSNLRNLLAVIPTFPVTSLSIEKVDRSLMKSLDFIPKFQTLAGHQHNDLSVPEVQKGVGLFNSMLSLQLGERAQLVEFTNELLALKNVYSEVGVNGSPLESFNNSSFNEVSSLGYDHDFENRAQAVSMLCQIYAIVIQKHSSISPTASFQSIGHELSRFADLLSNKLFPSSIPLYASADKVSSIRDQQKGINDLIEYCRKKRTELPELSYCFKHLVSLQSLKSISRTQVDLTNDEFLNLMNFVLNLFDSLLSSIETATKNMRTFKELAETSSFIEMSSCFSKVLRAFNLKFQSMKLSSLKEKLRSSSVDKMSCQLLMLFLPVCEQFINLAESVLDYFINVHNSNLDSLSKISTLFFMVANNGFCSPDLPQEGKSNSGELESGTGLGSGVGAEDITNTLNEDDDLEELANEEDTANQSDLDESEARELESDMNGVTKDSVVSENENSDSEEENQDLDEEVNDIPEDLSNSLNEKLWDEPNEEDLLETEQKSNEQSAANNESDLVSKEDDNKALEDKDRQEKEDEEEMSDDVGIDDEIQPDIQENNSQPPPENEDHLDLPEDLKLDEKEGDVSKDSDLEDMDMEAADENKEEADAEKDEPMQDFEDPLEENNTLDEDIQQDDFSDLAEDDEKMNEDGFEENVQENEESTEDGVKSDEELEQGEVPEDQAIDNHPKMDAKSTFASAEADEENTDKGIVGENEELGEEDGAAESGVRGNGTADGEFSSAEQVQKGEDTSTPKEAMSEADRQYQSLGDHLREWQQANRIHEWEDLTESQSQAFDDSEFMHVKEDEEEDLQALGNAEKDQIKSIDRDESANQNPDSMNSTNIAEDEADEVGDKQLQDGQDISDIKQTGEDTLPTEFGSINQSEKVFELSEDEDIEDELPDYNVKITNLPAAMPIDEARDLWNKHEDSTKQLSIELCEQLRLILEPTLATKMQGDFRTGKRLNMKRIIPYIASQFKKDKIWMRRVKPSKRTYQVMISIDDSKSMSESGSTVLALETLALVTKALSLLEVGQIAVMKFGEQPELLHPFDKQFSSESGVQMFSHFTFEQSNTNVLALADASMKCFNYANTASHHRSNSDIRQLEIIISDGICEDHDSIRKLLRRAQEEKVMIVFVILDNVNTQKKSSILDIKKVYYDTKEDGTMDLKIQPYIDEFAFDYYLVVRNIEELPQLLSSALRQWFQQMSNT.

6 AAA-ATPase protomer regions span residues 149–384 (LVQK…FGAF), 458–797 (EQLA…GLRR), 871–1131 (EHYI…QEVI), 1157–1448 (SLKE…NACE), 1552–1811 (VLRA…EVFD), and 1858–2106 (VLES…FLLK). Residues 159 to 166 (GPEGIGKK) and 474 to 481 (GETGTGKT) contribute to the ATP site. Phosphoserine is present on serine 593. ATP contacts are provided by residues 901–908 (GPTSSGKT), 1193–1200 (GDTGCGKT), 1566–1573 (GSPGVGKT), and 1876–1883 (GDTATGKT). The interval 2173–3925 (KLLRKVLLTN…SGVGAEDITN (1753 aa)) is linker. Disordered stretches follow at residues 3898-3924 (PQEG…EDIT), 3936-4283 (LANE…LGDH), and 4295-4365 (EWED…EVGD). Composition is skewed to acidic residues over residues 3936–3950 (LANE…DLDE) and 3973–3993 (ENSD…DIPE). Over residues 4020-4030 (NEQSAANNESD) the composition is skewed to polar residues. Positions 4031-4049 (LVSKEDDNKALEDKDRQEK) are enriched in basic and acidic residues. Positions 4050–4066 (EDEEEMSDDVGIDDEIQ) are enriched in acidic residues. Basic and acidic residues predominate over residues 4080–4103 (NEDHLDLPEDLKLDEKEGDVSKDS). 3 stretches are compositionally biased toward acidic residues: residues 4104–4177 (DLED…ESTE), 4184–4196 (EELE…EDQA), and 4226–4236 (ENEELGEEDGA). 2 stretches are compositionally biased toward basic and acidic residues: residues 4258-4275 (QKGE…EADR) and 4329-4342 (AEKD…RDES). A compositionally biased stretch (polar residues) spans 4343 to 4355 (ANQNPDSMNSTNI). The 203-residue stretch at 4505–4707 (QVMISIDDSK…ELPQLLSSAL (203 aa)) folds into the VWFA domain.

The protein belongs to the midasin family. As to quaternary structure, associates with pre-60S ribosomes in the nucleoplasm.

Its subcellular location is the nucleus. It is found in the nucleolus. The protein resides in the nucleoplasm. Its function is as follows. Nuclear chaperone required for maturation and nuclear export of pre-60S ribosome subunits. Functions at successive maturation steps to remove ribosomal factors at critical transition points, first driving the exit of early pre-60S particles from the nucleolus and then driving late pre-60S particles from the nucleus. The sequence is that of Midasin (mdn1) from Schizosaccharomyces pombe (strain 972 / ATCC 24843) (Fission yeast).